Consider the following 546-residue polypeptide: MDSQRNLLLIALLFVSFMIWQAWQVDNNPQPTAQTTQQTTNTATGDKASQAVPGSGQGQLITVKTDVLSLTINTRGGDIEQANLLAYPDTLGSSNTFELLETTPSFVYQAQSGLTGKNGPDNPANGDRPLFEVPQTSFVLADGQDELRIPLTFTSKDGSVFIKTFVLKRNDYAIGVDYHVNNASAAPLELTLFGQLKQSINLPKKRDTGSNNFALQTYRGAAYSSDETKYKKYSFSDIEDKNLDITTKGGWVAMLQQYFATAWIPAANETNTFYSAELGNGLAAIGFKGAPVVIQPGEQKQLSATLWVGPEIQNKMAEIAPHLDLTVDYGWLWFISQPLFKLLKFIHSFVGNWGFSIIVITFIVRGIMYPLTKAQYTSMAKMRLLQPKLAAMRERIGDDKQRMSQEMMALYKAEKVNPLGGCLPLIIQMPIFLALYYMLMSSVELRHAPFILWIHDLSAQDPYYILPILMGITMYFIQKMSPTTVTDPMQQKIMTFMPVIFTVFFLWFPAGLVLYYIVSNLVTILQQQLIYRGLEKRGLHSREKKK.

Residues 6-26 traverse the membrane as a helical segment; sequence NLLLIALLFVSFMIWQAWQVD. Positions 30–44 are enriched in low complexity; the sequence is QPTAQTTQQTTNTAT. A disordered region spans residues 30-55; that stretch reads QPTAQTTQQTTNTATGDKASQAVPGS. The next 4 membrane-spanning stretches (helical) occupy residues 344–364, 419–439, 457–477, and 498–518; these read KFIH…TFIV, LGGC…YYML, LSAQ…MYFI, and PVIF…YYIV.

The protein belongs to the OXA1/ALB3/YidC family. Type 1 subfamily. In terms of assembly, interacts with the Sec translocase complex via SecD. Specifically interacts with transmembrane segments of nascent integral membrane proteins during membrane integration.

The protein resides in the cell inner membrane. Required for the insertion and/or proper folding and/or complex formation of integral membrane proteins into the membrane. Involved in integration of membrane proteins that insert both dependently and independently of the Sec translocase complex, as well as at least some lipoproteins. Aids folding of multispanning membrane proteins. The sequence is that of Membrane protein insertase YidC from Yersinia pestis.